A 290-amino-acid polypeptide reads, in one-letter code: HTH-type transcriptional activator RhaR (290 aa).

The region spanning 179–277 is the HTH araC/xylS-type domain; it reads DLIMSALQQS…GMTPRDYRQR (99 aa). 2 DNA-binding regions (H-T-H motif) span residues 196–217 and 244–267; these read ANFC…RQQT and ISDI…TREA.

Binds DNA as a dimer.

It is found in the cytoplasm. Functionally, activates expression of the rhaSR operon in response to L-rhamnose. In Yersinia pseudotuberculosis serotype O:3 (strain YPIII), this protein is HTH-type transcriptional activator RhaR.